The chain runs to 407 residues: Aminomethyltransferase, mitochondrial (407 aa).

The N-terminal 29 residues, 1 to 29, are a transit peptide targeting the mitochondrion; the sequence is MRGGLWQLGQSITRRLGQSDKKTIARRCY. Residues Glu-234, Arg-265, and Tyr-403 each coordinate substrate.

It belongs to the GcvT family. As to quaternary structure, the glycine cleavage system is composed of four proteins: P, T, L and H.

It is found in the mitochondrion. It carries out the reaction N(6)-[(R)-S(8)-aminomethyldihydrolipoyl]-L-lysyl-[protein] + (6S)-5,6,7,8-tetrahydrofolate = N(6)-[(R)-dihydrolipoyl]-L-lysyl-[protein] + (6R)-5,10-methylene-5,6,7,8-tetrahydrofolate + NH4(+). The glycine cleavage system catalyzes the degradation of glycine. The protein is Aminomethyltransferase, mitochondrial (GDCST) of Flaveria pringlei.